Here is a 121-residue protein sequence, read N- to C-terminus: Non-structural protein 3a (121 aa).

Residues 1–39 (MMSMRSRRSMFIEHFNELMMRVQRPPTLLLILLVANAFS) form the signal peptide.

The protein is Non-structural protein 3a of Bat coronavirus HKU5 (BtCoV).